Consider the following 185-residue polypeptide: Sarcoplasmic calcium-binding proteins I, III, and IV (185 aa).

EF-hand domains follow at residues 5–41 (FQKQ…YKEV), 57–92 (SLED…TIAT), 102–137 (WCQN…FQLQ), and 138–173 (CADV…TSPA). The Ca(2+) site is built by Asp19, Asn21, Asp23, Ser25, Asp30, Asp70, Asn72, Asp74, Glu81, Asp115, Ser117, Asp119, and Glu126.

In terms of biological role, like parvalbumins, SCPs seem to be more abundant in fast contracting muscles, but no functional relationship can be established from this distribution. The protein is Sarcoplasmic calcium-binding proteins I, III, and IV of Branchiostoma lanceolatum (Common lancelet).